We begin with the raw amino-acid sequence, 310 residues long: UDP-N-acetylenolpyruvoylglucosamine reductase (310 aa).

Residues 35–199 (VGGPAQALFT…TSARFRGTPA (165 aa)) form the FAD-binding PCMH-type domain. The active site involves Arg-179. Residue Ser-228 is the Proton donor of the active site. Glu-298 is a catalytic residue.

The protein belongs to the MurB family. It depends on FAD as a cofactor.

It is found in the cytoplasm. The catalysed reaction is UDP-N-acetyl-alpha-D-muramate + NADP(+) = UDP-N-acetyl-3-O-(1-carboxyvinyl)-alpha-D-glucosamine + NADPH + H(+). Its pathway is cell wall biogenesis; peptidoglycan biosynthesis. In terms of biological role, cell wall formation. In Rhodopseudomonas palustris (strain BisB5), this protein is UDP-N-acetylenolpyruvoylglucosamine reductase.